We begin with the raw amino-acid sequence, 122 residues long: Aspartate 1-decarboxylase (122 aa).

Ser-25 serves as the catalytic Schiff-base intermediate with substrate; via pyruvic acid. The residue at position 25 (Ser-25) is a Pyruvic acid (Ser). Thr-57 is a binding site for substrate. The Proton donor role is filled by Tyr-58. 73–75 lines the substrate pocket; sequence GAA.

The protein belongs to the PanD family. As to quaternary structure, heterooctamer of four alpha and four beta subunits. The cofactor is pyruvate. Post-translationally, is synthesized initially as an inactive proenzyme, which is activated by self-cleavage at a specific serine bond to produce a beta-subunit with a hydroxyl group at its C-terminus and an alpha-subunit with a pyruvoyl group at its N-terminus.

It localises to the cytoplasm. It carries out the reaction L-aspartate + H(+) = beta-alanine + CO2. It functions in the pathway cofactor biosynthesis; (R)-pantothenate biosynthesis; beta-alanine from L-aspartate: step 1/1. Functionally, catalyzes the pyruvoyl-dependent decarboxylation of aspartate to produce beta-alanine. The chain is Aspartate 1-decarboxylase from Bordetella pertussis (strain Tohama I / ATCC BAA-589 / NCTC 13251).